The chain runs to 80 residues: Putative membrane protein insertion efficiency factor (80 aa).

A disordered region spans residues 61–80 (KTGKDPVPDRFSLKRNQEGE). Basic and acidic residues predominate over residues 62–80 (TGKDPVPDRFSLKRNQEGE).

It belongs to the UPF0161 family.

Its subcellular location is the cell membrane. Functionally, could be involved in insertion of integral membrane proteins into the membrane. The sequence is that of Putative membrane protein insertion efficiency factor from Streptococcus pneumoniae (strain P1031).